The primary structure comprises 351 residues: Histidinol-phosphate aminotransferase (351 aa).

K215 bears the N6-(pyridoxal phosphate)lysine mark.

This sequence belongs to the class-II pyridoxal-phosphate-dependent aminotransferase family. Histidinol-phosphate aminotransferase subfamily. The cofactor is pyridoxal 5'-phosphate.

The enzyme catalyses L-histidinol phosphate + 2-oxoglutarate = 3-(imidazol-4-yl)-2-oxopropyl phosphate + L-glutamate. Its pathway is amino-acid biosynthesis; L-histidine biosynthesis; L-histidine from 5-phospho-alpha-D-ribose 1-diphosphate: step 7/9. The polypeptide is Histidinol-phosphate aminotransferase (Methanocorpusculum labreanum (strain ATCC 43576 / DSM 4855 / Z)).